Reading from the N-terminus, the 121-residue chain is UPF0295 protein OB0906 (121 aa).

Helical transmembrane passes span Ile-14–Leu-34 and Val-43–Ile-63.

The protein belongs to the UPF0295 family.

The protein localises to the cell membrane. In Oceanobacillus iheyensis (strain DSM 14371 / CIP 107618 / JCM 11309 / KCTC 3954 / HTE831), this protein is UPF0295 protein OB0906.